The primary structure comprises 231 residues: Potassium/proton antiporter CemA (231 aa).

Transmembrane regions (helical) follow at residues 7-27, 104-124, 154-174, and 189-209; these read FIPL…SFTF, IHTI…SVYS, ILFL…ELMI, and IISF…KYWI.

This sequence belongs to the CemA family.

The protein resides in the plastid. It localises to the chloroplast inner membrane. The enzyme catalyses K(+)(in) + H(+)(out) = K(+)(out) + H(+)(in). Contributes to K(+)/H(+) antiport activity by supporting proton efflux to control proton extrusion and homeostasis in chloroplasts in a light-dependent manner to modulate photosynthesis. Prevents excessive induction of non-photochemical quenching (NPQ) under continuous-light conditions. Indirectly promotes efficient inorganic carbon uptake into chloroplasts. The chain is Potassium/proton antiporter CemA from Pisum sativum (Garden pea).